The sequence spans 487 residues: 1-aminocyclopropane-1-carboxylate synthase 1 (487 aa).

At Lys286 the chain carries N6-(pyridoxal phosphate)lysine.

This sequence belongs to the class-I pyridoxal-phosphate-dependent aminotransferase family. Homodimer. Pyridoxal 5'-phosphate is required as a cofactor.

The catalysed reaction is S-adenosyl-L-methionine = 1-aminocyclopropane-1-carboxylate + S-methyl-5'-thioadenosine + H(+). The protein operates within alkene biosynthesis; ethylene biosynthesis via S-adenosyl-L-methionine; ethylene from S-adenosyl-L-methionine: step 1/2. Functionally, catalyzes the formation of 1-aminocyclopropane-1-carboxylate, a direct precursor of ethylene in higher plants. The polypeptide is 1-aminocyclopropane-1-carboxylate synthase 1 (ACC1) (Oryza sativa subsp. indica (Rice)).